The sequence spans 146 residues: Protein phosphatase 1 regulatory subunit 14D (146 aa).

Residues 1-16 (MLSSSAASCTSPNPDT) show a composition bias toward polar residues. The disordered stretch occupies residues 1-57 (MLSSSAASCTSPNPDTDNPDKKVRWSSEKRRRASSTDSESKTHLDISKLPRSRRPSR). Composition is skewed to basic and acidic residues over residues 18 to 28 (NPDKKVRWSSE) and 38 to 48 (SESKTHLDISK). Positions 21-25 (KKVRW) are interaction with protein phosphatase 1.

It belongs to the PP1 inhibitor family. Phosphorylated on several residues.

The protein localises to the cytoplasm. Inhibitor of PPP1CA. Has inhibitory activity only when phosphorylated, creating a molecular switch for regulating the phosphorylation status of PPP1CA substrates and smooth muscle contraction. The polypeptide is Protein phosphatase 1 regulatory subunit 14D (Ppp1r14d) (Rattus norvegicus (Rat)).